The following is a 403-amino-acid chain: Imidazolonepropionase (403 aa).

The Fe(3+) site is built by H69 and H71. Zn(2+) contacts are provided by H69 and H71. The 4-imidazolone-5-propanoate site is built by R78, Y141, and H174. Y141 contacts N-formimidoyl-L-glutamate. H239 is a binding site for Fe(3+). H239 contacts Zn(2+). Q242 lines the 4-imidazolone-5-propanoate pocket. D314 serves as a coordination point for Fe(3+). D314 is a Zn(2+) binding site. Positions 316 and 318 each coordinate N-formimidoyl-L-glutamate. S319 lines the 4-imidazolone-5-propanoate pocket.

Belongs to the metallo-dependent hydrolases superfamily. HutI family. Requires Zn(2+) as cofactor. It depends on Fe(3+) as a cofactor.

Its subcellular location is the cytoplasm. It carries out the reaction 4-imidazolone-5-propanoate + H2O = N-formimidoyl-L-glutamate. The protein operates within amino-acid degradation; L-histidine degradation into L-glutamate; N-formimidoyl-L-glutamate from L-histidine: step 3/3. Its function is as follows. Catalyzes the hydrolytic cleavage of the carbon-nitrogen bond in imidazolone-5-propanoate to yield N-formimidoyl-L-glutamate. It is the third step in the universal histidine degradation pathway. This chain is Imidazolonepropionase, found in Legionella pneumophila (strain Corby).